The chain runs to 277 residues: Probable endonuclease 4 (277 aa).

Positions 70, 108, 143, 176, 179, 210, 223, 225, and 255 each coordinate Zn(2+).

The protein belongs to the AP endonuclease 2 family. The cofactor is Zn(2+).

It catalyses the reaction Endonucleolytic cleavage to 5'-phosphooligonucleotide end-products.. In terms of biological role, endonuclease IV plays a role in DNA repair. It cleaves phosphodiester bonds at apurinic or apyrimidinic (AP) sites, generating a 3'-hydroxyl group and a 5'-terminal sugar phosphate. This Mycoplasmopsis synoviae (strain 53) (Mycoplasma synoviae) protein is Probable endonuclease 4.